The primary structure comprises 557 residues: Formate--tetrahydrofolate ligase (557 aa).

ATP is bound at residue 67–74 (TPAGEGKT).

Belongs to the formate--tetrahydrofolate ligase family.

The enzyme catalyses (6S)-5,6,7,8-tetrahydrofolate + formate + ATP = (6R)-10-formyltetrahydrofolate + ADP + phosphate. The protein operates within one-carbon metabolism; tetrahydrofolate interconversion. This Cereibacter sphaeroides (strain KD131 / KCTC 12085) (Rhodobacter sphaeroides) protein is Formate--tetrahydrofolate ligase.